The primary structure comprises 457 residues: Prenyltransferase ucdE (457 aa).

7 residues coordinate dimethylallyl diphosphate: R106, K198, K277, Y279, Y382, Y447, and Y451.

The protein belongs to the tryptophan dimethylallyltransferase family.

The protein operates within secondary metabolite biosynthesis. Its function is as follows. Nonribosomal peptide synthetase that mediates the biosynthesis of usterphenyllins and uscandidusins, p-terphenyl derivatives. Within the pathway, ucdE prenylates position C-5 of ring A of 3,15-dihydroxyterphenyllin to produce forms usterphenyllin B. UcdE further prenylates position C-14 of ring C of usterphenyllin B to form usterphenyllin A. The pathway begin with the biosynthesis of 4-hydroxyphenylpyruvate (HPPA) from L-tyrosine, possibly by the aminotransferase ucdG. The nonribosomal peptide synthetase ucdA then condenses two HPPA units to produce atromentin. The key step in this pathway is the reduction and dehydration of atromentin to form a terphenyl triol intermediate, performed by the NAD-dependent dehydrogenase ucdB. Further O-methylation by the methyltransferase ucdC forms terphenyllin carrying two methoxy moieties at C-9 and C-12, and subsequent dihydroxylation at C-3 of ring A and C-15 of ring C by the flavin-dependent oxygenase ucdD leads to 3,15-dihydroxyterphenyllin. Prenylation by ucdE at position C-5 of ring A forms usterphenyllin B, and is followed by a second prenylation at position C-14 of ring C to form usterphenyllin A. The following furan ring formation that leads to uscandidusins A and B was proven to be an unexpected spontaneous non-enzymatic reaction. This is Prenyltransferase ucdE from Aspergillus ustus.